We begin with the raw amino-acid sequence, 501 residues long: MSSGQQPPRRVTNVGSLLLTPQENESLFSFLGKKCVTMSSAVVQLYAADRNCMWAKKCSGVACLVKDNPQRSYFLRIFDIKDGKLLWEQELYNNFVYNSPRGYFHTFAGDTCQVALNFANEEEAKKFRKAVTDLLGRRQRKSEKRRDAPNGPNLPMATVDIKNPEITTNRFYGSQVNNISHTKEKKKGKAKKKRLTKADIGTPSNFQHIGHVGWDPNTGFDLNNLDPELKNLFDMCGISEAQLKDRETSKVIYDFIEKTGGVEAVKNELRRQAPPPPPPSRGGPPPPPPPPHSSGPPPPPARGRGAPPPPPSRAPTAAPPPPPPSRPGVVVPPPPPNRMYPPPPPALPSSAPSGPPPPPPPSMAGSTAPPPPPPPPPPPGPPPPPGLPSDGDHQVPAPSGNKAALLDQIREGAQLKKVEQNSRPVSCSGRDALLDQIRQGIQLKSVSDGQESTPPTPAPTSGIVGALMEVMQKRSKAIHSSDEDEDDDDEEDFEDDDEWED.

Ser-2 is modified (N-acetylserine). One can recognise a WH1 domain in the interval 31-138 (LGKKCVTMSS…KAVTDLLGRR (108 aa)). The segment at 135-158 (LGRRQRKSEKRRDAPNGPNLPMAT) is disordered. The region spanning 200–213 (IGTPSNFQHIGHVG) is the CRIB domain. A Phosphoserine; by TNK2 modification is found at Ser-239. At Tyr-253 the chain carries Phosphotyrosine; by FAK1 and TNK2. Disordered stretches follow at residues 263–403 (EAVK…GNKA) and 442–501 (QLKS…EWED). The span at 273–387 (APPPPPPSRG…PPGPPPPPGL (115 aa)) shows a compositional bias: pro residues. Arg-304 bears the Omega-N-methylarginine mark. 2 WH2 domains span residues 401-418 (NKAALLDQIREGAQLKKV) and 429-446 (GRDALLDQIRQGIQLKSV). Polar residues predominate over residues 442-453 (QLKSVSDGQEST). Ser-480 and Ser-481 each carry phosphoserine. Over residues 482-501 (DEDEDDDDEEDFEDDDEWED) the composition is skewed to acidic residues.

Binds actin and the Arp2/3 complex. Interacts with CDC42. Interacts with FCHSD1. Interacts with FCHSD2. Binds to SH3 domains of GRB2. Interacts with the C-terminal SH3 domain of DNMBP. Interacts with SNX9. Interacts with the WW domains of PRPF40A/FBP11. Interacts with PTK2/FAK1. Interacts with PACSIN1, PACSIN2 and PACSIN3. Interacts with NOSTRIN. Binds to TNK2. Interacts with SNX33. Interacts with NONO (via second RRM domain); the interaction is direct. Component of a multiprotein complex with NONO and SFPQ; associates with the complex via direct interaction with NONO. Post-translationally, phosphorylation at Ser-239, Tyr-253, Ser-480 and Ser-481 enhances actin polymerization activity.

The protein resides in the cytoplasm. It localises to the cytoskeleton. It is found in the nucleus. Regulates actin polymerization by stimulating the actin-nucleating activity of the Arp2/3 complex. Involved in various processes, such as mitosis and cytokinesis, via its role in the regulation of actin polymerization. Together with CDC42, involved in the extension and maintenance of the formation of thin, actin-rich surface projections called filopodia. In addition to its role in the cytoplasm, also plays a role in the nucleus by regulating gene transcription, probably by promoting nuclear actin polymerization. Binds to HSF1/HSTF1 and forms a complex on heat shock promoter elements (HSE) that negatively regulates HSP90 expression. Plays a role in dendrite spine morphogenesis. The sequence is that of Actin nucleation-promoting factor WASL (Wasl) from Mus musculus (Mouse).